Consider the following 300-residue polypeptide: Kynurenine formamidase (300 aa).

An HGGXW motif is present at residues 86–90; sequence HGGYW. S157 functions as the Nucleophile in the catalytic mechanism. Active-site residues include D244 and H276.

The protein belongs to the kynurenine formamidase family. Homodimer.

The enzyme catalyses N-formyl-L-kynurenine + H2O = L-kynurenine + formate + H(+). It participates in amino-acid degradation; L-tryptophan degradation via kynurenine pathway; L-kynurenine from L-tryptophan: step 2/2. Catalyzes the hydrolysis of N-formyl-L-kynurenine to L-kynurenine, the second step in the kynurenine pathway of tryptophan degradation. Required for elimination of toxic metabolites. The sequence is that of Kynurenine formamidase (KFase) from Drosophila melanogaster (Fruit fly).